A 348-amino-acid chain; its full sequence is MARPMGKLPSNTRKCAQCAMAEALLEIAGQTINQKDLGRSGRMTRTDNDTWDLASSVGATATMIATARALASRAENPLINDPFAEPLVRAVGIDLFTRLASGELRLEDIGDHATGGRWMIDNIAIRTKFYDDFFGDATTAGIRQVVILAAGLDTRAYRLPWPPGTVVYEIDQPAVIKFKTRALANLNAEPNAERHAVAVDLRNDWPTALKNAGFDPARPTAFSAEGLLSYLPPQGQDRLLDAITALSAPDSRLATQSPLVLDLAEEDEKKMRMKSAAEAWRERGFDLDLTELIYFDQRNDVADYLAGSGWQVTTSTGKELFAAQGLPPFEDDHITRFADRRYISAVLK.

S-adenosyl-L-methionine is bound by residues Asp171 and Asp200–Leu201.

This sequence belongs to the UPF0677 family.

Exhibits S-adenosyl-L-methionine-dependent methyltransferase activity. The chain is Putative S-adenosyl-L-methionine-dependent methyltransferase Mb3432 from Mycobacterium bovis (strain ATCC BAA-935 / AF2122/97).